The sequence spans 270 residues: Phosphatidylglycerol--prolipoprotein diacylglyceryl transferase (270 aa).

7 consecutive transmembrane segments (helical) span residues 10-30 (VAVAIGPLQIHWYGLMYLVGI), 56-76 (LIFWLAMGVIVGGRLGYVLFY), 92-112 (WKGGMAFHGGFVGVMIAAWWF), 120-140 (FFQLMDFVAPLVPIGLGAGRI), 175-195 (SQLYQFALEGVALFIILNLYA), 202-222 (MAVSGMFALFYGIFRFVVEFV), and 237-257 (VTMGQILSLPMIIAGLFLIWL). Residue arginine 139 participates in a 1,2-diacyl-sn-glycero-3-phospho-(1'-sn-glycerol) binding.

Belongs to the Lgt family.

It is found in the cell inner membrane. It catalyses the reaction L-cysteinyl-[prolipoprotein] + a 1,2-diacyl-sn-glycero-3-phospho-(1'-sn-glycerol) = an S-1,2-diacyl-sn-glyceryl-L-cysteinyl-[prolipoprotein] + sn-glycerol 1-phosphate + H(+). The protein operates within protein modification; lipoprotein biosynthesis (diacylglyceryl transfer). Its function is as follows. Catalyzes the transfer of the diacylglyceryl group from phosphatidylglycerol to the sulfhydryl group of the N-terminal cysteine of a prolipoprotein, the first step in the formation of mature lipoproteins. This Pseudomonas savastanoi pv. phaseolicola (strain 1448A / Race 6) (Pseudomonas syringae pv. phaseolicola (strain 1448A / Race 6)) protein is Phosphatidylglycerol--prolipoprotein diacylglyceryl transferase.